A 234-amino-acid polypeptide reads, in one-letter code: uncharacterized protein (234 aa).

4 LRR repeats span residues L44 to L63, K64 to P84, N85 to Q107, and L111 to L134. The tract at residues E161–K234 is disordered. Residues L163–E226 are compositionally biased toward acidic residues.

It belongs to the ANP32 family. In terms of tissue distribution, expressed in activated stem cells, such as mobilized CD34+ cells and cord blood CD34+ cells, but not in resting bone marrow CD34+ cells. Expressed in a variety of neoplastic cell lines, mainly in prostatic adenocarcinoma cell lines. Not expressed in normal prostatic tissue.

This is an uncharacterized protein from Homo sapiens (Human).